A 107-amino-acid chain; its full sequence is Parvalbumin beta 2 (107 aa).

An N-acetylserine modification is found at Ser1. 2 consecutive EF-hand domains span residues 37 to 72 and 89 to 107; these read XSPD…FSAS and DADG…LVKQ. Asp50, Asp52, Ser54, Phe56, Glu58, Glu61, Asp89, Asp91, Asp93, Met95, and Glu100 together coordinate Ca(2+).

Belongs to the parvalbumin family.

In terms of biological role, in muscle, parvalbumin is thought to be involved in relaxation after contraction. It binds two calcium ions. The sequence is that of Parvalbumin beta 2 from Oncorhynchus mykiss (Rainbow trout).